We begin with the raw amino-acid sequence, 130 residues long: Flagellar assembly factor FliW (130 aa).

The protein belongs to the FliW family. As to quaternary structure, interacts with translational regulator CsrA and flagellin(s).

The protein resides in the cytoplasm. Acts as an anti-CsrA protein, binds CsrA and prevents it from repressing translation of its target genes, one of which is flagellin. Binds to flagellin and participates in the assembly of the flagellum. The protein is Flagellar assembly factor FliW of Borrelia duttonii (strain Ly).